Here is a 273-residue protein sequence, read N- to C-terminus: MVFYKYSGSGNDFLIVQSFKKKDFSNLAKQVCHRHEGFGADGLVVVLPSKDYDYEWDFYNSDGSKAGMCGNASRCVGLFAYQHAIASKNHVFLAGKREISICIEEPNIIESNLGNYKILDTIPALRCEKFFTNDSVLENIPTFYLIDTGVPHLVGFVKNKEWLNSLNTLELRALRHAFNANINIAFIENKETIFLQTYERGVEDFTLACGTGMAAVFIAARIFYNTPEKAALIPKSSESLELSLKNDEIFYKGAVRYIGMSVLGMSVFENGCF.

Substrate contacts are provided by Asn11 and Asn60. Residue Cys69 is the Proton donor of the active site. Residues 70–71 (GN), Asn181, and 199–200 (ER) each bind substrate. Cys209 functions as the Proton acceptor in the catalytic mechanism. 210 to 211 (GT) is a substrate binding site.

This sequence belongs to the diaminopimelate epimerase family. Homodimer.

It localises to the cytoplasm. The catalysed reaction is (2S,6S)-2,6-diaminopimelate = meso-2,6-diaminopimelate. It functions in the pathway amino-acid biosynthesis; L-lysine biosynthesis via DAP pathway; DL-2,6-diaminopimelate from LL-2,6-diaminopimelate: step 1/1. Functionally, catalyzes the stereoinversion of LL-2,6-diaminopimelate (L,L-DAP) to meso-diaminopimelate (meso-DAP), a precursor of L-lysine and an essential component of the bacterial peptidoglycan. This Helicobacter pylori (strain Shi470) protein is Diaminopimelate epimerase.